The sequence spans 152 residues: uncharacterized protein (152 aa).

An N-terminal signal peptide occupies residues Met-1 to Ala-16. The region spanning Asn-20 to Tyr-135 is the Cytochrome c domain. Heme c contacts are provided by Cys-33, Cys-36, and His-37.

This is an uncharacterized protein from Aquifex aeolicus (strain VF5).